Consider the following 20-residue polypeptide: Disintegrin (20 aa).

A Disintegrin domain is found at 1–20 (EAGEECDCGTPENPCCDAAT). 2 cysteine pairs are disulfide-bonded: cysteine 6/cysteine 15 and cysteine 8/cysteine 16.

It belongs to the venom metalloproteinase (M12B) family. P-II subfamily. P-IIa sub-subfamily. Monomer. In terms of tissue distribution, expressed by the venom gland.

Its subcellular location is the secreted. Functionally, inhibits fibrinogen interaction with platelets. Acts by binding to alpha-IIb/beta-3 (ITGA2B/ITGB3) on the platelet surface and inhibits aggregation induced by ADP, thrombin, platelet-activating factor and collagen. This is Disintegrin from Bothrops fonsecai (Fonseca's lancehead).